The following is a 640-amino-acid chain: Threonine--tRNA ligase (640 aa).

Residues 224–525 (DHRKLGKELD…LTEHYAGAFP (302 aa)) form a catalytic region. Zn(2+) is bound by residues Cys323, His374, and His502.

This sequence belongs to the class-II aminoacyl-tRNA synthetase family. In terms of assembly, homodimer. It depends on Zn(2+) as a cofactor.

The protein resides in the cytoplasm. It carries out the reaction tRNA(Thr) + L-threonine + ATP = L-threonyl-tRNA(Thr) + AMP + diphosphate + H(+). Catalyzes the attachment of threonine to tRNA(Thr) in a two-step reaction: L-threonine is first activated by ATP to form Thr-AMP and then transferred to the acceptor end of tRNA(Thr). Also edits incorrectly charged L-seryl-tRNA(Thr). This is Threonine--tRNA ligase from Tropheryma whipplei (strain TW08/27) (Whipple's bacillus).